A 563-amino-acid chain; its full sequence is BOS complex subunit NCLN (563 aa).

The N-terminal stretch at 1-42 (MLEEAGEVLENMLKASCLPLGFIVFLPAVLLLVAPPLPAADA) is a signal peptide. Residues 43-522 (AHEFTVYRMQ…VMNAYRVKPA (480 aa)) lie on the Lumenal side of the membrane. Asn-241 and Asn-428 each carry an N-linked (GlcNAc...) asparagine glycan. Residues 523 to 543 (IFDLLLAVCIGAYLGMAYTAV) traverse the membrane as a helical segment. The Cytoplasmic segment spans residues 544–563 (QHFDLLYKTVQRLLVKAKTQ).

The protein belongs to the nicastrin family. Component of the back of Sec61 (BOS) complex, composed of NCLN/Nicalin, NOMO1 and TMEM147. The BOS complex is part of the multi-pass translocon (MPT) complex, composed of three subcomplexes, the GEL complex (composed of RAB5IF/OPTI and TMCO1), the BOS complex (composed of NCLN/Nicalin, NOMO1 and TMEM147) and the PAT complex (composed of WDR83OS/Asterix and CCDC47). The MPT complex associates with the SEC61 complex.

The protein resides in the endoplasmic reticulum membrane. In terms of biological role, component of the multi-pass translocon (MPT) complex that mediates insertion of multi-pass membrane proteins into the lipid bilayer of membranes. The MPT complex takes over after the SEC61 complex: following membrane insertion of the first few transmembrane segments of proteins by the SEC61 complex, the MPT complex occludes the lateral gate of the SEC61 complex to promote insertion of subsequent transmembrane regions. May antagonize Nodal signaling and subsequent organization of axial structures during mesodermal patterning, via its interaction with NOMO. The protein is BOS complex subunit NCLN of Canis lupus familiaris (Dog).